Reading from the N-terminus, the 241-residue chain is Trypsin-1 (241 aa).

A signal peptide spans 1 to 13 (MKSLIFVLLLGAV). Residues 14 to 19 (FAEEDK) constitute a propeptide, activation peptide. Positions 20–239 (IVGGYECTKH…LSGWVRDTMA (220 aa)) constitute a Peptidase S1 domain. Intrachain disulfides connect C26/C155, C44/C60, C128/C228, C135/C201, C166/C180, and C191/C215. Catalysis depends on charge relay system residues H59 and D103. S195 serves as the catalytic Charge relay system.

It belongs to the peptidase S1 family.

It localises to the secreted. The protein resides in the extracellular space. The enzyme catalyses Preferential cleavage: Arg-|-Xaa, Lys-|-Xaa.. The polypeptide is Trypsin-1 (Gadus morhua (Atlantic cod)).